The sequence spans 354 residues: S-adenosylmethionine:tRNA ribosyltransferase-isomerase (354 aa).

It belongs to the QueA family. In terms of assembly, monomer.

The protein localises to the cytoplasm. The catalysed reaction is 7-aminomethyl-7-carbaguanosine(34) in tRNA + S-adenosyl-L-methionine = epoxyqueuosine(34) in tRNA + adenine + L-methionine + 2 H(+). It participates in tRNA modification; tRNA-queuosine biosynthesis. Transfers and isomerizes the ribose moiety from AdoMet to the 7-aminomethyl group of 7-deazaguanine (preQ1-tRNA) to give epoxyqueuosine (oQ-tRNA). The polypeptide is S-adenosylmethionine:tRNA ribosyltransferase-isomerase (Salmonella dublin (strain CT_02021853)).